The sequence spans 63 residues: Large ribosomal subunit protein uL30 (63 aa).

This sequence belongs to the universal ribosomal protein uL30 family. Part of the 50S ribosomal subunit.

This is Large ribosomal subunit protein uL30 from Bradyrhizobium sp. (strain BTAi1 / ATCC BAA-1182).